The following is a 62-amino-acid chain: Light-harvesting protein B-870 alpha chain (62 aa).

M1 is subject to N-formylmethionine. The Cytoplasmic segment spans residues 1 to 12; that stretch reads MWRIWQLFDPRQ. The chain crosses the membrane as a helical span at residues 13–33; that stretch reads ALVGLATFLFVLALLIHFILL. An a bacteriochlorophyll-binding site is contributed by H29. The Periplasmic portion of the chain corresponds to 34 to 52; the sequence is STERFNWLEGASTKPVQTS. Positions 53–62 are excised as a propeptide; that stretch reads MVMPSSDLAV.

This sequence belongs to the antenna complex alpha subunit family. In terms of assembly, the core complex is formed by different alpha and beta chains, binding bacteriochlorophyll molecules, and arranged most probably in tetrameric structures disposed around the reaction center. The non-pigmented gamma chains may constitute additional components.

It localises to the cell inner membrane. Functionally, antenna complexes are light-harvesting systems, which transfer the excitation energy to the reaction centers. The sequence is that of Light-harvesting protein B-870 alpha chain from Rhodospirillum rubrum.